Here is a 368-residue protein sequence, read N- to C-terminus: DNA replication and repair protein RecF (368 aa).

G30–T37 is a binding site for ATP.

Belongs to the RecF family.

It localises to the cytoplasm. In terms of biological role, the RecF protein is involved in DNA metabolism; it is required for DNA replication and normal SOS inducibility. RecF binds preferentially to single-stranded, linear DNA. It also seems to bind ATP. This is DNA replication and repair protein RecF from Xanthomonas euvesicatoria pv. vesicatoria (strain 85-10) (Xanthomonas campestris pv. vesicatoria).